The chain runs to 217 residues: 3,4-dihydroxy-2-butanone 4-phosphate synthase (217 aa).

D-ribulose 5-phosphate-binding positions include 37-38 (RE), Asp-42, 150-154 (RRGHT), and Glu-174. Glu-38 contacts Mg(2+). His-153 is a binding site for Mg(2+).

This sequence belongs to the DHBP synthase family. As to quaternary structure, homodimer. Mg(2+) is required as a cofactor. The cofactor is Mn(2+).

The catalysed reaction is D-ribulose 5-phosphate = (2S)-2-hydroxy-3-oxobutyl phosphate + formate + H(+). The protein operates within cofactor biosynthesis; riboflavin biosynthesis; 2-hydroxy-3-oxobutyl phosphate from D-ribulose 5-phosphate: step 1/1. In terms of biological role, catalyzes the conversion of D-ribulose 5-phosphate to formate and 3,4-dihydroxy-2-butanone 4-phosphate. This Shewanella baltica (strain OS155 / ATCC BAA-1091) protein is 3,4-dihydroxy-2-butanone 4-phosphate synthase.